Reading from the N-terminus, the 49-residue chain is uncharacterized protein (49 aa).

A helical membrane pass occupies residues 5–27 (ILEILSAFIRILFKLLYCWALFF).

It is found in the membrane. This is an uncharacterized protein from Saccharomyces cerevisiae (strain ATCC 204508 / S288c) (Baker's yeast).